The following is a 600-amino-acid chain: Gamma-terpinene synthase, chloroplastic (600 aa).

The transit peptide at 1 to 40 (MALNLLSSLPAACNFTRLSLPLSSKVNGFVPPITQVQYPM) directs the protein to the chloroplast. Residues Asp353, Asp357, Asp498, and Glu506 each contribute to the Mg(2+) site. A DDXXD motif motif is present at residues 353–357 (DDVYD).

Belongs to the terpene synthase family. The cofactor is Mn(2+). Mg(2+) is required as a cofactor.

It is found in the plastid. Its subcellular location is the chloroplast. It catalyses the reaction (2E)-geranyl diphosphate = gamma-terpinene + diphosphate. It participates in secondary metabolite biosynthesis; terpenoid biosynthesis. With respect to regulation, inhibited by 100 mM KCl. Its function is as follows. Monoterpene synthase which catalyzes the conversion of geranyl diphosphate to gamma-terpinene and the minor products limonene, alpha-pinene, beta-pinene, alpha-terpinolene, alpha-thujene, alpha-terpinene, myrcene and sabinene. This Citrus limon (Lemon) protein is Gamma-terpinene synthase, chloroplastic.